The sequence spans 277 residues: B3 domain-containing protein At3g19184 (277 aa).

The tract at residues 33–94 (QSLRVSSSSS…LERRPRRSSR (62 aa)) is disordered. Positions 130 to 221 (FTKPMLQSHV…TFKVYIIRVN (92 aa)) form a DNA-binding region, TF-B3. Positions 224-250 (ANNDSDGNEVNDDDSDGNEEDRDNDNE) are enriched in acidic residues. The interval 224–277 (ANNDSDGNEVNDDDSDGNEEDRDNDNESNEKQKETVSEGRQLRSSGKRKRRGRK) is disordered. The segment covering 251–264 (SNEKQKETVSEGRQ) has biased composition (basic and acidic residues). Over residues 268–277 (SGKRKRRGRK) the composition is skewed to basic residues.

The protein localises to the nucleus. This Arabidopsis thaliana (Mouse-ear cress) protein is B3 domain-containing protein At3g19184.